An 877-amino-acid chain; its full sequence is Leucine--tRNA ligase (877 aa).

The short motif at 48–58 is the 'HIGH' region element; it reads PYPSGKLHMGH. The 'KMSKS' region signature appears at 636–640; sequence KMSKS. Residue K639 coordinates ATP.

It belongs to the class-I aminoacyl-tRNA synthetase family.

Its subcellular location is the cytoplasm. The catalysed reaction is tRNA(Leu) + L-leucine + ATP = L-leucyl-tRNA(Leu) + AMP + diphosphate. The protein is Leucine--tRNA ligase of Ralstonia nicotianae (strain ATCC BAA-1114 / GMI1000) (Ralstonia solanacearum).